A 282-amino-acid chain; its full sequence is 4-diphosphocytidyl-2-C-methyl-D-erythritol kinase (282 aa).

K9 is an active-site residue. 98-108 (PMGGGLGGGSS) contacts ATP. The active site involves D140.

Belongs to the GHMP kinase family. IspE subfamily. As to quaternary structure, homodimer.

It catalyses the reaction 4-CDP-2-C-methyl-D-erythritol + ATP = 4-CDP-2-C-methyl-D-erythritol 2-phosphate + ADP + H(+). Its pathway is isoprenoid biosynthesis; isopentenyl diphosphate biosynthesis via DXP pathway; isopentenyl diphosphate from 1-deoxy-D-xylulose 5-phosphate: step 3/6. Catalyzes the phosphorylation of the position 2 hydroxy group of 4-diphosphocytidyl-2C-methyl-D-erythritol. The sequence is that of 4-diphosphocytidyl-2-C-methyl-D-erythritol kinase from Klebsiella pneumoniae (strain 342).